A 572-amino-acid polypeptide reads, in one-letter code: Mitochondrial chaperone TCM62 (572 aa).

A mitochondrion-targeting transit peptide spans methionine 1–cysteine 16. At serine 17–lysine 471 the chain is on the mitochondrial matrix side. A helical transmembrane segment spans residues valine 472–alanine 488. The Mitochondrial intermembrane segment spans residues phenylalanine 489–alanine 572.

It belongs to the chaperonin (HSP60) family. Forms a high molecular mass protein complex of approximately 850 kDa.

Its subcellular location is the mitochondrion inner membrane. Its function is as follows. Chaperone. Required for the assembly of succinate dehydrogenase subunits. Ensures mitochondrial gene expression at elevated temperatures and prevents heat-aggregation of the ribosomal subunit VAR1. This Saccharomyces cerevisiae (strain YJM789) (Baker's yeast) protein is Mitochondrial chaperone TCM62 (TCM62).